The primary structure comprises 207 residues: Outer-membrane lipoprotein carrier protein (207 aa).

An N-terminal signal peptide occupies residues 1–21; that stretch reads MRAIRMLLVSALALGTVTAYA.

Belongs to the LolA family. As to quaternary structure, monomer.

The protein resides in the periplasm. Functionally, participates in the translocation of lipoproteins from the inner membrane to the outer membrane. Only forms a complex with a lipoprotein if the residue after the N-terminal Cys is not an aspartate (The Asp acts as a targeting signal to indicate that the lipoprotein should stay in the inner membrane). The protein is Outer-membrane lipoprotein carrier protein of Pseudomonas putida (strain GB-1).